The chain runs to 218 residues: Probable nicotinate-nucleotide adenylyltransferase (218 aa).

It belongs to the NadD family.

The enzyme catalyses nicotinate beta-D-ribonucleotide + ATP + H(+) = deamido-NAD(+) + diphosphate. Its pathway is cofactor biosynthesis; NAD(+) biosynthesis; deamido-NAD(+) from nicotinate D-ribonucleotide: step 1/1. Catalyzes the reversible adenylation of nicotinate mononucleotide (NaMN) to nicotinic acid adenine dinucleotide (NaAD). The chain is Probable nicotinate-nucleotide adenylyltransferase from Halorhodospira halophila (strain DSM 244 / SL1) (Ectothiorhodospira halophila (strain DSM 244 / SL1)).